Reading from the N-terminus, the 451-residue chain is UDP-glycosyltransferase 13 (451 aa).

H15 serves as the catalytic Proton acceptor. H15 contributes to the an anthocyanidin binding site. D93 serves as the catalytic Charge relay. UDP-alpha-D-glucose-binding residues include A326, Q328, H343, W346, N347, S348, and E351. Position 366 (A366) interacts with an anthocyanidin. Positions 367 and 368 each coordinate UDP-alpha-D-glucose.

The protein belongs to the UDP-glycosyltransferase family. In terms of tissue distribution, expressed in roots. Detected in stems and leaves.

The catalysed reaction is a 7-hydroxyisoflavone + UDP-alpha-D-glucose = a 7-hydroxyisoflavone 7-O-beta-D-glucoside + UDP + H(+). In terms of biological role, isoflavone 7-O-glucosyltransferase converting daidzein to daidzin, genistein to genistin and formononetin to ononin. Shows some activity toward the flavanones liquiritigenin and naringenin, but not toward cyanidin, isoliquiritigenin, apigenin, luteolin, kaempferol, quercetin, daidzin and puerarin. This chain is UDP-glycosyltransferase 13, found in Pueraria montana var. lobata (Kudzu vine).